Consider the following 187-residue polypeptide: Guanylate kinase (187 aa).

In terms of domain architecture, Guanylate kinase-like spans 5–183; it reads GRLTVLTGPS…ALKQLETHMQ (179 aa). 12–19 serves as a coordination point for ATP; it reads GPSGVGKG.

Belongs to the guanylate kinase family.

It localises to the cytoplasm. The enzyme catalyses GMP + ATP = GDP + ADP. It carries out the reaction dZMP + ATP = dZDP + ADP. It functions in the pathway purine metabolism. Functionally, essential for recycling GMP and indirectly, cGMP. In terms of biological role, (Microbial infection) Catalyzes the phosphorylation of dZMP to dZDP, when the bacterium is infected by a phage that produces the substrate for the synthesis of dZTP (2- amino-2'-deoxyadenosine 5'-triphosphate), which is then used by the phage as a DNA polymerase substrate. This Synechococcus sp. (strain CC9902) protein is Guanylate kinase.